The sequence spans 146 residues: Hemoglobin subunit beta (146 aa).

Valine 1 is subject to N-acetylvaline; partial. The Globin domain maps to 2-146; sequence HLTDAEKAAV…VANALAHKYH (145 aa). Residue threonine 12 is modified to Phosphothreonine. Lysine 59 carries the post-translational modification N6-acetyllysine. Histidine 63 is a heme b binding site. Lysine 82 carries the N6-acetyllysine modification. Histidine 92 contacts heme b. An S-nitrosocysteine modification is found at cysteine 93. At lysine 144 the chain carries N6-acetyllysine.

This sequence belongs to the globin family. Heterotetramer of two alpha chains and two beta chains. In terms of tissue distribution, red blood cells.

Involved in oxygen transport from the lung to the various peripheral tissues. The protein is Hemoglobin subunit beta (HBB) of Procavia capensis habessinica (Abyssinian hyrax).